A 563-amino-acid polypeptide reads, in one-letter code: Lipase 1 (563 aa).

A signal peptide spans 1 to 19 (MVSKTFFLAAALNVVGTLA). The residue at position 20 (Gln-20) is a Pyrrolidone carboxylic acid. The cysteines at positions 80 and 124 are disulfide-linked. Residue Ser-236 is the Acyl-ester intermediate of the active site. Cys-295 and Cys-307 form a disulfide bridge. An N-linked (GlcNAc...) asparagine glycan is attached at Asn-302. Residue Glu-373 is the Charge relay system of the active site. The N-linked (GlcNAc...) asparagine glycan is linked to Asn-383. The active-site Charge relay system is the His-482.

It belongs to the type-B carboxylesterase/lipase family. Monomer.

The protein localises to the secreted. It carries out the reaction a triacylglycerol + H2O = a diacylglycerol + a fatty acid + H(+). Hydrolyzes all ester bonds in triglyceride and displays a high affinity for triolein. For unsaturated substrates having long fatty acyl chains (C18:2 cis-9, cis-12 and C18:3 cis-9, cis-12, cis-15) GCL I shows higher specific activity than GCL II, whereas GCL II shows higher specific activity against saturated substrates having short fatty acid chains (C8, C10, C12 and C14). This Geotrichum candidum (Oospora lactis) protein is Lipase 1 (LIP1).